Consider the following 403-residue polypeptide: GPI mannosyltransferase 1 (403 aa).

Topologically, residues 1 to 4 (MTGE) are cytoplasmic. Residues 5 to 25 (EWGLTVLSFLVRVGFFLFGIY) form a helical membrane-spanning segment. Over 26–78 (QDANFKVRYTDIDYFVFHDAAKYVYEGKSPYARDTYRYTPLLSWLLVPNHYFG) the chain is Lumenal. Residues 79–99 (WFHLGKVIFVIFDLVTGLIIM) form a helical membrane-spanning segment. Residues 100–110 (KLLNQAISRKR) lie on the Cytoplasmic side of the membrane. Residues 111–131 (ALILESIWLLNPMVITISTRG) traverse the membrane as a helical segment. A topological domain (lumenal) is located at residue Asn132. Residues 133 to 149 (AESVLCCLIMFTLFFLQ) form a helical membrane-spanning segment. Residues 150–160 (KSRYTLAGILY) lie on the Cytoplasmic side of the membrane. Residues 161–181 (GLSIHFKIYPIIYCIPIAIFI) form a helical membrane-spanning segment. Over 182–193 (YYNKRNQGPRTQ) the chain is Lumenal. Residues 194–214 (LTSLLNIGLSTLTTLLGCGWA) traverse the membrane as a helical segment. Residues 215-266 (MYKIYGYEFLDQAYLYHLYRTDHRHNFSVWNMLLYLDSANKENGESNLSRYA) lie on the Cytoplasmic side of the membrane. A helical transmembrane segment spans residues 267 to 287 (FVPQLLLVLVTGCLEWWNPTF). Residues 288–310 (DNLLRVLFVQTFAFVTYNKVCTS) lie on the Lumenal side of the membrane. A helical transmembrane segment spans residues 311-331 (QYFVWYLIFLPFYLSRTHIGW). The Cytoplasmic portion of the chain corresponds to 332 to 334 (KKG). Residues 335 to 355 (LLMATLWVGTQGIWLSQGYYL) traverse the membrane as a helical segment. Topologically, residues 356–361 (EFEGKN) are lumenal. The chain crosses the membrane as a helical span at residues 362–382 (VFYPGLFIASVLFFVTNVWLL). At 383 to 403 (GQFITDIKIPTQPTVSNKKNN) the chain is on the cytoplasmic side.

Belongs to the PIGM family.

The protein resides in the endoplasmic reticulum membrane. Its pathway is glycolipid biosynthesis; glycosylphosphatidylinositol-anchor biosynthesis. In terms of biological role, mannosyltransferase involved in glycosylphosphatidylinositol-anchor biosynthesis. Transfers the first alpha-1,4-mannose to GlcN-acyl-PI during GPI precursor assembly. Required for cell wall integrity. The protein is GPI mannosyltransferase 1 (GPI14) of Saccharomyces cerevisiae (strain ATCC 204508 / S288c) (Baker's yeast).